Consider the following 115-residue polypeptide: Pycsar effector protein TpPycTM (115 aa).

2 helical membrane-spanning segments follow: residues 44–64 and 74–94; these read IGNLLLIDTITVGIFITYATN and VWNILLFITGLIFTVSSVILV.

The protein localises to the cell inner membrane. In terms of biological role, pycsar (pyrimidine cyclase system for antiphage resistance) provides immunity against bacteriophage. The pyrimidine cyclase (PycC) synthesizes cyclic nucleotides in response to infection; these serve as specific second messenger signals. The signals activate the adjacent effector, leading to bacterial cell death and abortive phage infection. A clade C Pycsar system. Its function is as follows. The effector gene of a two-gene Pycsar system. Expression of this and adjacent uridylate cyclase TpPycC (AC A0A1T4LJ54) probably confers resistance to bacteriophage. The genes are probably only expressed in response to bacteriophage infection. Probably only responds to cUMP (produced by its cognate NTP cyclase), acts by impairing membrane integrity. This chain is Pycsar effector protein TpPycTM, found in Treponema porcinum.